A 210-amino-acid chain; its full sequence is Somatotropin (210 aa).

The signal sequence occupies residues Met1 to Ala22. A Zn(2+)-binding site is contributed by His38. An intrachain disulfide couples Cys71 to Cys183. Glu192 lines the Zn(2+) pocket. Cys200 and Cys208 are oxidised to a cystine.

It belongs to the somatotropin/prolactin family.

The protein resides in the secreted. In terms of biological role, growth hormone plays an important role in growth control and is involved in the regulation of several anabolic processes. Implicated as an osmoregulatory substance important for seawater adaptation. The polypeptide is Somatotropin (gh) (Oncorhynchus keta (Chum salmon)).